The sequence spans 441 residues: Signal recognition particle 54 kDa protein (441 aa).

Residues 103 to 110, 184 to 188, and 244 to 247 each bind GTP; these read GVQGSGKT, DTAGR, and TKMD.

This sequence belongs to the GTP-binding SRP family. SRP54 subfamily. Part of the signal recognition particle protein translocation system, which is composed of SRP and FtsY. Archaeal SRP consists of a 7S RNA molecule of 300 nucleotides and two protein subunits: SRP54 and SRP19.

The protein resides in the cytoplasm. The enzyme catalyses GTP + H2O = GDP + phosphate + H(+). Involved in targeting and insertion of nascent membrane proteins into the cytoplasmic membrane. Binds to the hydrophobic signal sequence of the ribosome-nascent chain (RNC) as it emerges from the ribosomes. The SRP-RNC complex is then targeted to the cytoplasmic membrane where it interacts with the SRP receptor FtsY. This is Signal recognition particle 54 kDa protein from Aeropyrum pernix (strain ATCC 700893 / DSM 11879 / JCM 9820 / NBRC 100138 / K1).